Consider the following 751-residue polypeptide: C2 domain-containing protein At1g53590 (751 aa).

2 consecutive transmembrane segments (helical) span residues 2–22 and 26–46; these read ESSLIHHIIIVLLLLWFISSL and HAFFYFLALIYLYLVHERYVM. The SMP-LTD domain occupies 68–262; sequence DSESVRWMNY…QPNMLVVDME (195 aa). The 115-residue stretch at 267 to 381 folds into the C2 domain; the sequence is PTSENWFFVD…RGGQRNDMWL (115 aa). Ca(2+) is bound by residues D298, D304, D352, D354, and D359. Disordered stretches follow at residues 469 to 519 and 572 to 751; these read QIWE…GRGL and SGPL…SSSK. The segment covering 472 to 482 has biased composition (basic and acidic residues); sequence EPRKGKSRRLD. A compositionally biased stretch (polar residues) spans 483-502; the sequence is SQIQRTPNDESLSNGSSSTD. The span at 590–611 shows a compositional bias: basic and acidic residues; the sequence is NSGKGHMKDVAKSFLKQAEKSA. The span at 612–624 shows a compositional bias: basic residues; sequence KQIKHAFSRKGSM. The segment covering 625–634 has biased composition (basic and acidic residues); sequence KPRDGHKEIV. Residues 639-651 are compositionally biased toward acidic residues; the sequence is SGTDSESSDDDDA. Basic and acidic residues-rich tracts occupy residues 664-681 and 703-751; these read KLTRDGNIERTGDDDHVD and VEAK…SSSK. A coiled-coil region spans residues 701 to 728; sequence TDVEAKEEKLKEAAESETRDMDTAMNIK.

Belongs to the extended synaptotagmin family. It depends on Ca(2+) as a cofactor.

Its subcellular location is the membrane. In Arabidopsis thaliana (Mouse-ear cress), this protein is C2 domain-containing protein At1g53590 (NTMC2T6.1).